Reading from the N-terminus, the 643-residue chain is Phosphomethylpyrimidine synthase (643 aa).

Substrate-binding positions include asparagine 248, methionine 277, tyrosine 306, histidine 342, 362–364 (SRG), 403–406 (DGLR), and glutamate 442. A Zn(2+)-binding site is contributed by histidine 446. Residue tyrosine 469 coordinates substrate. Histidine 510 is a Zn(2+) binding site. Residues cysteine 590, cysteine 593, and cysteine 598 each contribute to the [4Fe-4S] cluster site.

Belongs to the ThiC family. As to quaternary structure, homodimer. The cofactor is [4Fe-4S] cluster.

It catalyses the reaction 5-amino-1-(5-phospho-beta-D-ribosyl)imidazole + S-adenosyl-L-methionine = 4-amino-2-methyl-5-(phosphooxymethyl)pyrimidine + CO + 5'-deoxyadenosine + formate + L-methionine + 3 H(+). It participates in cofactor biosynthesis; thiamine diphosphate biosynthesis. Catalyzes the synthesis of the hydroxymethylpyrimidine phosphate (HMP-P) moiety of thiamine from aminoimidazole ribotide (AIR) in a radical S-adenosyl-L-methionine (SAM)-dependent reaction. The protein is Phosphomethylpyrimidine synthase of Burkholderia pseudomallei (strain 1106a).